We begin with the raw amino-acid sequence, 350 residues long: Nuclear pore complex-interacting protein family member A3 (350 aa).

The tract at residues 306–325 (KTPPECLLTPLPPSAPPSVD) is disordered.

The protein belongs to the NPIP family.

This Homo sapiens (Human) protein is Nuclear pore complex-interacting protein family member A3 (NPIPA3).